The following is a 172-amino-acid chain: MAILIPASFGRLTITSRAQVRVRVSASANQRTIRRDSVDWVKETSSFFEEDKRPIMLFDGVCNLCNGGVKFVRDHDRNRSIRFEALQSEAGKKLLLRSGRAPDDISSVVLVENDRSYIKSEAVLKIMKYIDLPFPQLAFFLQFAPLFVRDFLYENVANNRYAMFGRSDSCEL.

The transit peptide at 1–25 (MAILIPASFGRLTITSRAQVRVRVS) directs the protein to the chloroplast.

It belongs to the DCC thiol-disulfide oxidoreductase family.

It is found in the plastid. The protein localises to the chloroplast. This chain is DCC family protein At1g52590, chloroplastic, found in Arabidopsis thaliana (Mouse-ear cress).